The chain runs to 494 residues: Putative transporter SVOPL (494 aa).

Transmembrane regions (helical) follow at residues 48–68 (IALFLIMGSTGVVEAMEIMLI), 86–106 (VAFVTTMVFFGYMVSSILFGL), 121–141 (FLWGAYFSLLTSFSPSYIWFV), 179–199 (VFWLAGSLLIISMASVVIPTI), 203–223 (WLIRIASIPGIILIMAFKFIP), 281–301 (TLQIWIIWLGISFAYYGVILA), 350–370 (IISTLGEIALNPLNILGINFL), 385–405 (LFFLLLNICTSSAGLIGFLFM), 431–451 (AIGMGTSGSLCRIGAMVAPFI), and 460–480 (FLGALCLFSSVCVVCAISAFT).

The protein belongs to the major facilitator superfamily.

It is found in the membrane. The sequence is that of Putative transporter SVOPL (Svopl) from Mus musculus (Mouse).